A 778-amino-acid polypeptide reads, in one-letter code: Ent-trachylobane synthase KSL2, chloroplastic (778 aa).

Residues Met-1–Ile-37 constitute a chloroplast transit peptide. Mg(2+) is bound by residues Asp-529, Asp-533, Asn-672, Asp-673, and Asp-680. A DDXXD motif motif is present at residues Asp-529–Asp-533.

Belongs to the terpene synthase family. Mg(2+) is required as a cofactor.

It is found in the plastid. Its subcellular location is the chloroplast. The enzyme catalyses ent-copalyl diphosphate = ent-trachylobane + diphosphate. It catalyses the reaction ent-copalyl diphosphate = ent-kaur-16-ene + diphosphate. The protein operates within secondary metabolite biosynthesis; terpenoid biosynthesis. Diterpene cyclase involved in the biosynthesis of labdane-related diterpenoids (LRDs) natural products. Catalyzes the cyclization of ent-CDP into ent-trachylobane as a major and ent-kaurene as a minor product. This chain is Ent-trachylobane synthase KSL2, chloroplastic, found in Ricinus communis (Castor bean).